Here is a 150-residue protein sequence, read N- to C-terminus: Glycine cleavage system H-like protein gcvH2 (150 aa).

One can recognise a Lipoyl-binding domain in the interval 44-126 (VATVGLSSFG…PANNWMVKFK (83 aa)).

This sequence belongs to the GcvH family.

This is Glycine cleavage system H-like protein gcvH2 (gcvH2) from Dictyostelium discoideum (Social amoeba).